The primary structure comprises 511 residues: MAVGQAKAAMGKISSAIGERSKRISGAMNEPRRKRKILLVIVCIAMLLDNMLYMVIVPIIPNYLETIRTYKLVYITTPSNGTNGSLLNSTQRAVLERNPNANEDIQIGVLFASKAILQLLSNPFTGTFIDRVGYDIPLLIGLTIMFFSTITFAFGESYAILFAARSLQGLGSAFADTSGIAMIADKYTEESERTQALGIALAFISFGSLVAPPFGGVLYQFAGKWVPFLVLSFVCLLDGILLLMVVTPFASRTRVNTLQGTPIYKLMIDPYIAVVAGALTTCNIPLAFLEPTISNWMKKTMNASEWQMGITWLPAFFPHILGVYITVKLAAKYPNYQWLYGAVGLVIIGASSCTIPACRNFEELIIPLCALCFGIALVDTALLPTLAFLVDIRYVSVYGSVYAIADISYSVAYALGPIMAGQIVHDLGFVQLNLGMGLVNILYAPGLLFLRNVCQMKPSLSERNILLEEGPKGLYDTIIMEERKEAKEPHGTSSGNHSVHAVLSDQEGYSE.

Topologically, residues 1–36 are cytoplasmic; that stretch reads MAVGQAKAAMGKISSAIGERSKRISGAMNEPRRKRK. Residues 37–57 form a helical membrane-spanning segment; it reads ILLVIVCIAMLLDNMLYMVIV. The Lumenal, vesicle segment spans residues 58–108; it reads PIIPNYLETIRTYKLVYITTPSNGTNGSLLNSTQRAVLERNPNANEDIQIG. Asparagine 80, asparagine 83, and asparagine 88 each carry an N-linked (GlcNAc...) asparagine glycan. A helical membrane pass occupies residues 109-129; sequence VLFASKAILQLLSNPFTGTFI. Residues 130-135 lie on the Cytoplasmic side of the membrane; it reads DRVGYD. A helical transmembrane segment spans residues 136–156; sequence IPLLIGLTIMFFSTITFAFGE. Topologically, residues 157–165 are lumenal, vesicle; sequence SYAILFAAR. Residues 166–186 traverse the membrane as a helical segment; that stretch reads SLQGLGSAFADTSGIAMIADK. Over 187–197 the chain is Cytoplasmic; it reads YTEESERTQAL. Residues 198–218 form a helical membrane-spanning segment; the sequence is GIALAFISFGSLVAPPFGGVL. Over 219 to 225 the chain is Lumenal, vesicle; sequence YQFAGKW. The helical transmembrane segment at 226–246 threads the bilayer; the sequence is VPFLVLSFVCLLDGILLLMVV. The Cytoplasmic portion of the chain corresponds to 247–267; sequence TPFASRTRVNTLQGTPIYKLM. Residues 268–288 form a helical membrane-spanning segment; sequence IDPYIAVVAGALTTCNIPLAF. The Lumenal, vesicle portion of the chain corresponds to 289–306; sequence LEPTISNWMKKTMNASEW. An N-linked (GlcNAc...) asparagine glycan is attached at asparagine 302. The chain crosses the membrane as a helical span at residues 307 to 327; it reads QMGITWLPAFFPHILGVYITV. The Cytoplasmic portion of the chain corresponds to 328 to 337; that stretch reads KLAAKYPNYQ. Residues 338-358 form a helical membrane-spanning segment; sequence WLYGAVGLVIIGASSCTIPAC. Residues 359–363 lie on the Lumenal, vesicle side of the membrane; that stretch reads RNFEE. Residues 364–384 form a helical membrane-spanning segment; that stretch reads LIIPLCALCFGIALVDTALLP. The Cytoplasmic portion of the chain corresponds to 385–400; it reads TLAFLVDIRYVSVYGS. Residues 401-421 form a helical membrane-spanning segment; that stretch reads VYAIADISYSVAYALGPIMAG. Residues 422–428 lie on the Lumenal, vesicle side of the membrane; that stretch reads QIVHDLG. The chain crosses the membrane as a helical span at residues 429-449; it reads FVQLNLGMGLVNILYAPGLLF. Over 450 to 511 the chain is Cytoplasmic; the sequence is LRNVCQMKPS…VLSDQEGYSE (62 aa). The segment at 485–511 is disordered; it reads EAKEPHGTSSGNHSVHAVLSDQEGYSE.

This sequence belongs to the major facilitator superfamily. Vesicular transporter family. High expression in the electric lobe of the brain.

It is found in the membrane. In terms of biological role, involved in acetylcholine transport into synaptic vesicles. The sequence is that of Vesicular acetylcholine transporter from Torpedo marmorata (Marbled electric ray).